The sequence spans 645 residues: UvrABC system protein C (645 aa).

One can recognise a GIY-YIG domain in the interval 12–91 (TGPGVYLYKN…IKQRKPRFNV (80 aa)). The region spanning 202-237 (ADLERSLEVRMQEAAAAEQFELAAKYRDLLVTLHQL) is the UVR domain.

The protein belongs to the UvrC family. In terms of assembly, interacts with UvrB in an incision complex.

Its subcellular location is the cytoplasm. Functionally, the UvrABC repair system catalyzes the recognition and processing of DNA lesions. UvrC both incises the 5' and 3' sides of the lesion. The N-terminal half is responsible for the 3' incision and the C-terminal half is responsible for the 5' incision. The chain is UvrABC system protein C from Acidobacterium capsulatum (strain ATCC 51196 / DSM 11244 / BCRC 80197 / JCM 7670 / NBRC 15755 / NCIMB 13165 / 161).